The following is a 204-amino-acid chain: NAD(P)H dehydrogenase (quinone) FQR1 (204 aa).

The region spanning 5–192 (VYIVYYSMYG…QQAFHQGQYI (188 aa)) is the Flavodoxin-like domain. Residues 11-15 (SMYGH), 112-165 (IFYS…SPYG), and histidine 136 each bind FMN. Tyrosine 13 contributes to the NAD(+) binding site.

It belongs to the WrbA family. Requires FMN as cofactor.

The protein resides in the cell membrane. The catalysed reaction is a quinone + NADH + H(+) = a quinol + NAD(+). The enzyme catalyses a quinone + NADPH + H(+) = a quinol + NADP(+). Functionally, catalyzes the transfer of electrons from NADH and NADPH to several quinones in vitro. May act as detoxification enzyme, and protect against auxin-induced oxidative stress. This is NAD(P)H dehydrogenase (quinone) FQR1 from Arabidopsis thaliana (Mouse-ear cress).